A 162-amino-acid polypeptide reads, in one-letter code: Succinate dehydrogenase assembly factor 2-A, mitochondrial (162 aa).

Belongs to the SDHAF2 family. In terms of assembly, interacts with the flavoprotein subunit within the SDH catalytic dimer.

It localises to the mitochondrion matrix. Functionally, plays an essential role in the assembly of succinate dehydrogenase (SDH), an enzyme complex (also referred to as respiratory complex II) that is a component of both the tricarboxylic acid (TCA) cycle and the mitochondrial electron transport chain, and which couples the oxidation of succinate to fumarate with the reduction of ubiquinone (coenzyme Q) to ubiquinol. Required for flavinylation (covalent attachment of FAD) of the flavoprotein subunit of the SDH catalytic dimer. This Drosophila yakuba (Fruit fly) protein is Succinate dehydrogenase assembly factor 2-A, mitochondrial.